Here is a 737-residue protein sequence, read N- to C-terminus: Zinc finger protein 585A (737 aa).

One can recognise a KRAB domain in the interval 1–65; sequence MAAPTREEWR…QGERPRQSCP (65 aa). C2H2-type zinc fingers lie at residues 126 to 148, 154 to 176, 182 to 204, 210 to 232, 238 to 260, and 266 to 288; these read YVCIECGKAFVQKPEFIIHQKTH, FKCNECGKSFFQVSSLFRHQRIH, YECSQCGKGFSYNSDLSIHEKIH, HECTDCGKAFTQKSTLKMHQKIH, YICIECGQAFIQKTHLIAHRRIH, and YECSNCGKSFISKSQLQVHQRVH. The segment at 294 to 316 adopts a C2H2-type 7; degenerate zinc-finger fold; sequence YICTEYGKVFSNNSNLITHKKVQ. 15 C2H2-type zinc fingers span residues 322 to 344, 350 to 372, 378 to 400, 406 to 428, 434 to 456, 462 to 484, 490 to 512, 518 to 540, 546 to 568, 574 to 596, 602 to 624, 630 to 652, 658 to 680, 686 to 708, and 714 to 736; these read SICTECGKAFTYRSELIIHQRIH, YACSDCGKAFTQKSALTVHQRIH, YICMKCGLAFIQKAHLIAHQIIH, YKCGHCGKLFTSKSQLHVHKRIH, YMCNKCGKAFTNRSNLITHQKTH, YICSKCGKAFTQRSDLITHQRIH, YECSTCGKAFTQKSHLNIHQKIH, YECHECGKAFNQKSILIVHQKIH, YVCTECGRAFIRKSNFITHQRIH, YECSDCGKSFTSKSQLLVHQPLH, YVCAECGKAFSGRSNLSKHQKTH, YICSECGKTFRQKSELITHHRIH, YECSDCGKSFTKKSQLQVHQRIH, YVCAECGKAFTDRSNLNKHQTTH, and YKCGICGKGFVQKSVFSVHQSNH.

The protein belongs to the krueppel C2H2-type zinc-finger protein family.

It localises to the nucleus. Functionally, may be involved in transcriptional regulation. The protein is Zinc finger protein 585A (ZNF585A) of Pongo abelii (Sumatran orangutan).